The following is a 336-amino-acid chain: Dihydroorotate dehydrogenase (quinone) (336 aa).

Residues 62-66 (AGLDK) and T86 each bind FMN. K66 is a binding site for substrate. Residue 111–115 (NRMGF) participates in substrate binding. 2 residues coordinate FMN: N139 and N172. N172 lines the substrate pocket. S175 acts as the Nucleophile in catalysis. Position 177 (N177) interacts with substrate. FMN contacts are provided by K217 and T245. Residue 246-247 (NT) participates in substrate binding. FMN contacts are provided by residues G268, G297, and 318-319 (YS).

The protein belongs to the dihydroorotate dehydrogenase family. Type 2 subfamily. As to quaternary structure, monomer. FMN is required as a cofactor.

The protein resides in the cell membrane. The catalysed reaction is (S)-dihydroorotate + a quinone = orotate + a quinol. Its pathway is pyrimidine metabolism; UMP biosynthesis via de novo pathway; orotate from (S)-dihydroorotate (quinone route): step 1/1. Catalyzes the conversion of dihydroorotate to orotate with quinone as electron acceptor. The sequence is that of Dihydroorotate dehydrogenase (quinone) from Escherichia coli (strain UTI89 / UPEC).